Reading from the N-terminus, the 310-residue chain is MSENRIRIATRKSPLAMWQAEFVKAELERIHPGIVVELLPMSTKGDVILDTPLAKVGGKGLFVKELEVAILEDQADIAVHSMKDVPVDFPEGLGLEVICEREDPRDAFVSNIYKTISELPLGATVGTSSLRRQCQLRASRPDLIIKDLRGNVGTRLAKLDNGEYDAIILAAAGLIRLKLSGRIASFISAEQSLPANGQGAVGIECRTNDERVKALLAPLEHLETRYRVIAERAMNTRLEGGCQVPIGAFAEINGDEMTLRGLVGNPDGSEIIEGIITGPKTEATQLGVALAEELLSKGAKSILDAVYAKA.

Cysteine 242 carries the post-translational modification S-(dipyrrolylmethanemethyl)cysteine.

The protein belongs to the HMBS family. As to quaternary structure, monomer. Dipyrromethane is required as a cofactor.

It carries out the reaction 4 porphobilinogen + H2O = hydroxymethylbilane + 4 NH4(+). Its pathway is porphyrin-containing compound metabolism; protoporphyrin-IX biosynthesis; coproporphyrinogen-III from 5-aminolevulinate: step 2/4. Functionally, tetrapolymerization of the monopyrrole PBG into the hydroxymethylbilane pre-uroporphyrinogen in several discrete steps. This chain is Porphobilinogen deaminase, found in Shewanella sp. (strain W3-18-1).